The following is a 238-amino-acid chain: Probable transcriptional regulatory protein SGO_0454 (238 aa).

The protein belongs to the TACO1 family. YeeN subfamily.

It is found in the cytoplasm. The chain is Probable transcriptional regulatory protein SGO_0454 from Streptococcus gordonii (strain Challis / ATCC 35105 / BCRC 15272 / CH1 / DL1 / V288).